The primary structure comprises 197 residues: Large ribosomal subunit protein bL9 (197 aa).

The interval 178–197 is disordered; sequence GEFFDPEAQEDEAAAGETAQ. A compositionally biased stretch (acidic residues) spans 181-191; that stretch reads FDPEAQEDEAA.

Belongs to the bacterial ribosomal protein bL9 family.

Its function is as follows. Binds to the 23S rRNA. This chain is Large ribosomal subunit protein bL9, found in Bradyrhizobium sp. (strain BTAi1 / ATCC BAA-1182).